The primary structure comprises 243 residues: UPF0173 metal-dependent hydrolase Caur_2542 (243 aa).

This sequence belongs to the UPF0173 family.

The protein is UPF0173 metal-dependent hydrolase Caur_2542 of Chloroflexus aurantiacus (strain ATCC 29366 / DSM 635 / J-10-fl).